The primary structure comprises 699 residues: MNKLDISTINIEQLTSDHAKKIVDFLALELQKYDQAYYSDNNPLVTDAQYDVLKNLNNKIVAKFPHLALVNDHSKKVGFTPSAQFSKVVHLKPMLSLANGFCVEDISNFITKIQNFLKIDHCPKIVCEYKIDGLSFNARYEYGVLTLASTRGDGQIGENITENLKTIQSFPQTLPITDKVFEVRGEIYITNNDFRVLNIQQQKLGKALFSNPRNAAAGSIRQLDPAITAQRPLKYFVYALGEVTNHHFASTQFELLQKLSQLKFSVNTDYILSDNLHSMIEFYNNVATERNNLAFEIDGVVYKVNDFALQERLGATSTSPRFAIAYKFPALIGRTKITNITLQVGKTGAVTPVAWLIPINIAGVTISRATLHNKQEIESKDIRIGDYVFLHRAGDVIPKINGVDLSARDTQSSERFIFPTTCPSCNQNLVVNEGETVARCGNSLACQAQIYERICHFVSKDALNIDGLGKQRIQFLLDNKYIVNIVDIFLLEENNKFLYSNKLEDIAGWGIKSVNKLFQNINQAKNVILDKFIYALAIKHVGKYSAKLLAKEFKTAKNFINQSLKLANNATEIYEKLRNIEGVGVKTADQLKQFFMVSANVNLITKLVNILTIQDWQYHGDNLLLSNQTIVFTGTFATVSRSEIKVQAEKLGAKVGTQVSNNTDLLVVGNKAGNKLQKAQQLGIKIINEEEWIKMVNEL.

NAD(+) is bound by residues 47-51 (DAQYD), 96-97 (SL), and glutamate 128. Lysine 130 acts as the N6-AMP-lysine intermediate in catalysis. Arginine 151, glutamate 186, lysine 303, and lysine 327 together coordinate NAD(+). Residues cysteine 422, cysteine 425, cysteine 440, and cysteine 446 each contribute to the Zn(2+) site. The region spanning 620–699 (GDNLLLSNQT…EEWIKMVNEL (80 aa)) is the BRCT domain.

This sequence belongs to the NAD-dependent DNA ligase family. LigA subfamily. The cofactor is Mg(2+). Requires Mn(2+) as cofactor.

The catalysed reaction is NAD(+) + (deoxyribonucleotide)n-3'-hydroxyl + 5'-phospho-(deoxyribonucleotide)m = (deoxyribonucleotide)n+m + AMP + beta-nicotinamide D-nucleotide.. DNA ligase that catalyzes the formation of phosphodiester linkages between 5'-phosphoryl and 3'-hydroxyl groups in double-stranded DNA using NAD as a coenzyme and as the energy source for the reaction. It is essential for DNA replication and repair of damaged DNA. This chain is DNA ligase, found in Orientia tsutsugamushi (strain Ikeda) (Rickettsia tsutsugamushi).